An 81-amino-acid chain; its full sequence is Large ribosomal subunit protein bL27 (81 aa).

Over residues 1-11 (MATSKSGGSSK) the composition is skewed to polar residues. The interval 1 to 26 (MATSKSGGSSKNGRDSISKRLGVKRS) is disordered.

Belongs to the bacterial ribosomal protein bL27 family.

This Borrelia turicatae (strain 91E135) protein is Large ribosomal subunit protein bL27.